Here is a 208-residue protein sequence, read N- to C-terminus: Imidazoleglycerol-phosphate dehydratase (208 aa).

The disordered stretch occupies residues 1–22 (MTRRAAVKAPRAGAAARRGSVA). A compositionally biased stretch (low complexity) spans 7-19 (VKAPRAGAAARRG).

The protein belongs to the imidazoleglycerol-phosphate dehydratase family.

The protein resides in the cytoplasm. It catalyses the reaction D-erythro-1-(imidazol-4-yl)glycerol 3-phosphate = 3-(imidazol-4-yl)-2-oxopropyl phosphate + H2O. It participates in amino-acid biosynthesis; L-histidine biosynthesis; L-histidine from 5-phospho-alpha-D-ribose 1-diphosphate: step 6/9. The sequence is that of Imidazoleglycerol-phosphate dehydratase from Anaeromyxobacter dehalogenans (strain 2CP-C).